Here is a 387-residue protein sequence, read N- to C-terminus: Patatin group D-2 (387 aa).

A signal peptide spans 1–23 (MATTKSFLILIVMILATTSSTFA). The PNPLA domain maps to 32–230 (LSIDGGGIKG…TVADPALLSI (199 aa)). Residues 36 to 41 (GGGIKG) carry the GXGXXG motif. The GXSXG motif lies at 75-79 (GTSTG). The active-site Nucleophile is the S77. A glycan (N-linked (GlcNAc...) asparagine) is linked at N115. D216 serves as the catalytic Proton acceptor. A DGA/G motif is present at residues 216-218 (DGA). Positions 361–385 (ETYEEALKRFAKLLSDRKKLRANKA) form a coiled coil.

This sequence belongs to the patatin family. In terms of tissue distribution, tuber.

The protein resides in the vacuole. In terms of biological role, probable lipolytic acyl hydrolase (LAH), an activity which is thought to be involved in the response of tubers to pathogens. The chain is Patatin group D-2 from Solanum tuberosum (Potato).